A 184-amino-acid polypeptide reads, in one-letter code: ATP-dependent protease subunit HslV (184 aa).

The active site involves Thr-12. Positions 166, 169, and 172 each coordinate Na(+).

The protein belongs to the peptidase T1B family. HslV subfamily. A double ring-shaped homohexamer of HslV is capped on each side by a ring-shaped HslU homohexamer. The assembly of the HslU/HslV complex is dependent on binding of ATP.

It is found in the cytoplasm. The catalysed reaction is ATP-dependent cleavage of peptide bonds with broad specificity.. Its activity is regulated as follows. Allosterically activated by HslU binding. Functionally, protease subunit of a proteasome-like degradation complex believed to be a general protein degrading machinery. The protein is ATP-dependent protease subunit HslV of Brucella abortus (strain S19).